Reading from the N-terminus, the 139-residue chain is MGITALAFDFGTKSIGCAIGQSITGTAQALPAFKAQDGIPNWEAIEKCLKEWKPDVVIVGLPLNMDGTEQNLTLLARKFANRLQGRFGVNVHLQDERLTTTQARSEIFERGGFKALKKGKVDGISACLILESWFECTEY.

This sequence belongs to the YqgF nuclease family.

It is found in the cytoplasm. Functionally, could be a nuclease involved in processing of the 5'-end of pre-16S rRNA. The chain is Putative pre-16S rRNA nuclease from Haemophilus influenzae (strain PittEE).